A 111-amino-acid polypeptide reads, in one-letter code: Putative pterin-4-alpha-carbinolamine dehydratase (111 aa).

This sequence belongs to the pterin-4-alpha-carbinolamine dehydratase family.

The enzyme catalyses (4aS,6R)-4a-hydroxy-L-erythro-5,6,7,8-tetrahydrobiopterin = (6R)-L-erythro-6,7-dihydrobiopterin + H2O. The protein is Putative pterin-4-alpha-carbinolamine dehydratase of Alkaliphilus metalliredigens (strain QYMF).